A 242-amino-acid chain; its full sequence is ATP synthase subunit a (242 aa).

6 consecutive transmembrane segments (helical) span residues 29–49 (SSIY…LAFY), 84–104 (FIPL…LGMT), 114–134 (IIVT…VGFV), 140–160 (FLTL…MIVI), 189–209 (VIAG…IPLM), and 210–230 (VILI…FTIL).

The protein belongs to the ATPase A chain family. F-type ATPases have 2 components, CF(1) - the catalytic core - and CF(0) - the membrane proton channel. CF(1) has five subunits: alpha(3), beta(3), gamma(1), delta(1), epsilon(1). CF(0) has three main subunits: a(1), b(2) and c(9-12). The alpha and beta chains form an alternating ring which encloses part of the gamma chain. CF(1) is attached to CF(0) by a central stalk formed by the gamma and epsilon chains, while a peripheral stalk is formed by the delta and b chains.

The protein localises to the cell inner membrane. Functionally, key component of the proton channel; it plays a direct role in the translocation of protons across the membrane. This chain is ATP synthase subunit a, found in Rickettsia felis (strain ATCC VR-1525 / URRWXCal2) (Rickettsia azadi).